The following is a 151-amino-acid chain: Macrodomain Ter protein (151 aa).

The protein belongs to the MatP family. As to quaternary structure, homodimer.

The protein localises to the cytoplasm. Functionally, required for spatial organization of the terminus region of the chromosome (Ter macrodomain) during the cell cycle. Prevents early segregation of duplicated Ter macrodomains during cell division. Binds specifically to matS, which is a 13 bp signature motif repeated within the Ter macrodomain. This Enterobacter sp. (strain 638) protein is Macrodomain Ter protein.